A 227-amino-acid polypeptide reads, in one-letter code: Cytidylate kinase (227 aa).

An ATP-binding site is contributed by 12-20 (GPSGAGKGT).

This sequence belongs to the cytidylate kinase family. Type 1 subfamily.

The protein resides in the cytoplasm. It catalyses the reaction CMP + ATP = CDP + ADP. The enzyme catalyses dCMP + ATP = dCDP + ADP. This Xanthomonas oryzae pv. oryzae (strain PXO99A) protein is Cytidylate kinase.